A 449-amino-acid chain; its full sequence is MYHLWIKCLAAWIFLKRFNGVHVMHAKAPMYPNEPFLVFWNAPTTQCRLRYKVDLDLKTFHIVANANDTLSGSAVTIFYPTHLGIYPHIDDRGHFFHGIIPQNESLTKHLDKSKSDINRIIPLKTFHGLGVIDWENWRPQWDRNWGNKNVYRNRSIQFARDLHPELSENKIRRLAKAEYEKAAKSFMRDTLLLAEEMRPDGYWGYYLYPDCQNYDYKTKGDQYTGKCPDIEMSRNDQLLWLWRESTALFPNVYLEIILRSSDNALKFVHHRLKESMRIASMAREDYALPVFVYARPFYAYTFEPLTQEDLVTTVGETAAMGAAGIVFWGSMQYASTVDSCQKVKKYMNGPLGRYIINVTTAAKICSHALCRKNGRCVRKHSDSNAFLHLFPESFRIMVHANATEKKVIVKGKLELENLIYLRENFMCQCYQGWQGLYCEEYSIKDIRKI.

The N-terminal stretch at 1 to 23 (MYHLWIKCLAAWIFLKRFNGVHV) is a signal peptide. 2 cysteine pairs are disulfide-bonded: Cys-47/Cys-340 and Cys-211/Cys-227. Residues Asn-67 and Asn-103 are each glycosylated (N-linked (GlcNAc...) asparagine). The Proton donor role is filled by Glu-135. The N-linked (GlcNAc...) asparagine glycan is linked to Asn-153. Asn-357 carries N-linked (GlcNAc...) asparagine glycosylation. 3 disulfides stabilise this stretch: Cys-365/Cys-376, Cys-370/Cys-427, and Cys-429/Cys-438. A glycan (N-linked (GlcNAc...) asparagine) is linked at Asn-401. One can recognise an EGF-like domain in the interval 427 to 438 (CQCYQGWQGLYC).

The protein belongs to the glycosyl hydrolase 56 family. Monomer. In terms of tissue distribution, expressed by the venom gland.

The protein resides in the secreted. It catalyses the reaction Random hydrolysis of (1-&gt;4)-linkages between N-acetyl-beta-D-glucosamine and D-glucuronate residues in hyaluronate.. Functionally, snake venom endo-hyaluronidase that degrades hyaluronan to smaller oligosaccharide fragments. In venom, it is not toxic by itself, but increases the diffusion of other venom proteins by degrading the extracellular matrix. In addition, it displays antiedematogenic activity. The protein is Hyaluronidase of Echis ocellatus (Ocellated saw-scaled viper).